Consider the following 207-residue polypeptide: Small ribosomal subunit protein uS4A (207 aa).

The region spanning 98–163 is the S4 RNA-binding domain; the sequence is TRLDNLVYRL…SPKFKELKEN (66 aa).

This sequence belongs to the universal ribosomal protein uS4 family. In terms of assembly, part of the 30S ribosomal subunit. Contacts protein S5. The interaction surface between S4 and S5 is involved in control of translational fidelity.

Its function is as follows. One of the primary rRNA binding proteins, it binds directly to 16S rRNA where it nucleates assembly of the body of the 30S subunit. In terms of biological role, with S5 and S12 plays an important role in translational accuracy. The sequence is that of Small ribosomal subunit protein uS4A from Alkaliphilus metalliredigens (strain QYMF).